A 163-amino-acid polypeptide reads, in one-letter code: NADH-quinone oxidoreductase subunit I (163 aa).

2 4Fe-4S ferredoxin-type domains span residues 53 to 83 and 94 to 123; these read LRRY…IEAG and VRYD…EGPN. Residues C63, C66, C69, C73, C103, C106, C109, and C113 each contribute to the [4Fe-4S] cluster site.

This sequence belongs to the complex I 23 kDa subunit family. In terms of assembly, NDH-1 is composed of 14 different subunits. Subunits NuoA, H, J, K, L, M, N constitute the membrane sector of the complex. Requires [4Fe-4S] cluster as cofactor.

Its subcellular location is the cell inner membrane. The catalysed reaction is a quinone + NADH + 5 H(+)(in) = a quinol + NAD(+) + 4 H(+)(out). NDH-1 shuttles electrons from NADH, via FMN and iron-sulfur (Fe-S) centers, to quinones in the respiratory chain. The immediate electron acceptor for the enzyme in this species is believed to be ubiquinone. Couples the redox reaction to proton translocation (for every two electrons transferred, four hydrogen ions are translocated across the cytoplasmic membrane), and thus conserves the redox energy in a proton gradient. The polypeptide is NADH-quinone oxidoreductase subunit I (Agrobacterium fabrum (strain C58 / ATCC 33970) (Agrobacterium tumefaciens (strain C58))).